A 363-amino-acid polypeptide reads, in one-letter code: Phospho-N-acetylmuramoyl-pentapeptide-transferase (363 aa).

The next 10 helical transmembrane spans lie at 33–53 (YAVLMGIALYAGFFFTYGVLP), 82–102 (GVIFVSVFVLLVYLLMRPSFV), 105–125 (LILLLTWGVMLTGYLDDCAQV), 133–153 (GALDFLFAVLTAALLGHFYFH), 166–186 (PVFVSPFLFFAGSVVILWMSI), 198–218 (LSGALVLMALLSMGTIFYFLL), 227–247 (LLVPFVVDGAQWALMSFALAG), 271–291 (ALGFFIGVLVLISGNPFLLLM), 295–315 (VILVNGGTGLLKVVLLRFFHV), and 340–360 (VLLRFMILQGLLTIGLLGVLF).

Belongs to the glycosyltransferase 4 family. MraY subfamily. Mg(2+) is required as a cofactor.

The protein resides in the cell inner membrane. The catalysed reaction is UDP-N-acetyl-alpha-D-muramoyl-L-alanyl-gamma-D-glutamyl-meso-2,6-diaminopimeloyl-D-alanyl-D-alanine + di-trans,octa-cis-undecaprenyl phosphate = di-trans,octa-cis-undecaprenyl diphospho-N-acetyl-alpha-D-muramoyl-L-alanyl-D-glutamyl-meso-2,6-diaminopimeloyl-D-alanyl-D-alanine + UMP. It functions in the pathway cell wall biogenesis; peptidoglycan biosynthesis. Functionally, catalyzes the initial step of the lipid cycle reactions in the biosynthesis of the cell wall peptidoglycan: transfers peptidoglycan precursor phospho-MurNAc-pentapeptide from UDP-MurNAc-pentapeptide onto the lipid carrier undecaprenyl phosphate, yielding undecaprenyl-pyrophosphoryl-MurNAc-pentapeptide, known as lipid I. This chain is Phospho-N-acetylmuramoyl-pentapeptide-transferase, found in Treponema pallidum (strain Nichols).